The sequence spans 316 residues: Tyrosine--tRNA ligase 2 (316 aa).

Positions 26, 146, 150, 153, and 168 each coordinate L-tyrosine. Positions 219–223 match the 'KMSKS' region motif; that stretch reads KMSKS. Residue K222 participates in ATP binding.

This sequence belongs to the class-I aminoacyl-tRNA synthetase family. TyrS type 4 subfamily. In terms of assembly, homodimer.

It localises to the cytoplasm. It carries out the reaction tRNA(Tyr) + L-tyrosine + ATP = L-tyrosyl-tRNA(Tyr) + AMP + diphosphate + H(+). Its function is as follows. Catalyzes the attachment of tyrosine to tRNA(Tyr) in a two-step reaction: tyrosine is first activated by ATP to form Tyr-AMP and then transferred to the acceptor end of tRNA(Tyr). In Pyrobaculum aerophilum (strain ATCC 51768 / DSM 7523 / JCM 9630 / CIP 104966 / NBRC 100827 / IM2), this protein is Tyrosine--tRNA ligase 2.